Reading from the N-terminus, the 240-residue chain is Protein FAM246C (240 aa).

Disordered stretches follow at residues 1–117 (MAEP…WRSA) and 161–240 (LPAA…TRAA). 2 stretches are compositionally biased toward basic and acidic residues: residues 19-31 (EVLR…RRDP) and 60-74 (AASR…KLVE). A compositionally biased stretch (pro residues) spans 165–175 (SPAPSPAPRPA). Residues 176 to 187 (ARPCRGRSAPLA) show a composition bias toward low complexity.

The protein belongs to the FAM246 family.

This is Protein FAM246C from Homo sapiens (Human).